The following is a 499-amino-acid chain: Cytochrome P450 11B1, mitochondrial (499 aa).

The transit peptide at 1 to 24 (MALRVTADVWLARPWQCLHRTRAL) directs the protein to the mitochondrion. Cys446 is a binding site for heme.

The protein belongs to the cytochrome P450 family. The cofactor is heme. Adrenal zona fasciculata/reticularis.

Its subcellular location is the mitochondrion inner membrane. It catalyses the reaction a steroid + 2 reduced [adrenodoxin] + O2 + 2 H(+) = an 11beta-hydroxysteroid + 2 oxidized [adrenodoxin] + H2O. It carries out the reaction 21-hydroxyprogesterone + 2 reduced [adrenodoxin] + O2 + 2 H(+) = corticosterone + 2 oxidized [adrenodoxin] + H2O. The catalysed reaction is 21-hydroxyprogesterone + 2 reduced [adrenodoxin] + O2 + 2 H(+) = 18-hydroxy-11-deoxycorticosterone + 2 oxidized [adrenodoxin] + H2O. The enzyme catalyses 21-hydroxyprogesterone + 2 reduced [adrenodoxin] + O2 + 2 H(+) = 19-hydroxy-11-deoxycorticosterone + 2 oxidized [adrenodoxin] + H2O. It catalyses the reaction 11-deoxycortisol + 2 reduced [adrenodoxin] + O2 + 2 H(+) = cortisol + 2 oxidized [adrenodoxin] + H2O. It carries out the reaction cortisol + 2 reduced [adrenodoxin] + O2 + 2 H(+) = 18-hydroxycortisol + 2 oxidized [adrenodoxin] + H2O. The catalysed reaction is 11-deoxycortisol + 2 reduced [adrenodoxin] + O2 + 2 H(+) = 18-hydroxy-11-deoxycortisol + 2 oxidized [adrenodoxin] + H2O. The protein operates within steroid biosynthesis; glucocorticoid biosynthesis. It participates in steroid hormone biosynthesis. Its function is as follows. A cytochrome P450 monooxygenase involved in the biosynthesis of adrenal corticoids. Catalyzes a variety of reactions that are essential for many species, including detoxification, defense, and the formation of endogenous chemicals like steroid hormones. Steroid 11beta, 18- and 19-hydroxylase with preferred regioselectivity at 11beta, then 18, and lastly 19. Catalyzes the hydroxylation of 11-deoxycortisol and 11-deoxycorticosterone (21-hydroxyprogesterone) at 11beta position, yielding cortisol or corticosterone, respectively, but cannot produce aldosterone. Mechanistically, uses molecular oxygen inserting one oxygen atom into a substrate for hydroxylation and reducing the second into a water molecule. Two electrons are provided by NADPH via a two-protein mitochondrial transfer system comprising flavoprotein FDXR (adrenodoxin/ferredoxin reductase) and nonheme iron-sulfur protein FDX1 or FDX2 (adrenodoxin/ferredoxin). Due to its lack of 18-oxidation activity, it is incapable of generating aldosterone. Could also be involved in the androgen metabolic pathway. This Rattus norvegicus (Rat) protein is Cytochrome P450 11B1, mitochondrial (Cyp11b1).